We begin with the raw amino-acid sequence, 780 residues long: Probable trehalase (780 aa).

Residues 1–48 (MVDFLPKVTEINPPSEGNDGEDNIKPLSSGSEQRPLKEEGQQGGRRHH) are disordered. Phosphoserine is present on residues S52 and S53. Phosphothreonine is present on T88. Residue S112 is modified to Phosphoserine. Substrate contacts are provided by residues R331, 338–339 (WD), N375, R384, 384–386 (RSQ), and G505. Residues D507 and E703 each act as proton donor/acceptor in the active site.

It belongs to the glycosyl hydrolase 37 family.

It carries out the reaction alpha,alpha-trehalose + H2O = alpha-D-glucose + beta-D-glucose. The polypeptide is Probable trehalase (NTH2) (Saccharomyces cerevisiae (strain ATCC 204508 / S288c) (Baker's yeast)).